Consider the following 330-residue polypeptide: G-protein coupled receptor 3 (330 aa).

Residues 1-42 (MMWGAGSPLAWLSAGSGNVNVSSVGPAEGPTGPAAPLPSPKA) lie on the Extracellular side of the membrane. N-linked (GlcNAc...) asparagine glycosylation is present at Asn20. The chain crosses the membrane as a helical span at residues 43-62 (WDVVLCISGTLVSCENALVV). The Cytoplasmic segment spans residues 63–74 (AIIVGTPAFRAP). Residues 75–98 (MFLLVGSLAVADLLAGLGLVLHFA) traverse the membrane as a helical segment. The Extracellular portion of the chain corresponds to 99-110 (AVFCIGSAEMSL). A helical transmembrane segment spans residues 111–132 (VLVGVLAMAFTASIGSLLAITV). At 133 to 153 (DRYLSLYNALTYYSETTVTRT) the chain is on the cytoplasmic side. A helical transmembrane segment spans residues 154 to 173 (YVMLALVWGGALGLGLLPVL). Topologically, residues 174–198 (AWNCLDGLTTCGVVYPLSKNHLVVL) are extracellular. The chain crosses the membrane as a helical span at residues 199–217 (AIAFFMVFGIMLQLYAQIC). The Cytoplasmic portion of the chain corresponds to 218–245 (RIVCRHAQQIALQRHLLPASHYVATRKG). A helical membrane pass occupies residues 246–272 (IATLAVVLGAFAACWLPFTVYCLLGDA). The Extracellular portion of the chain corresponds to 273–277 (HSPPL). Residues 278-299 (YTYLTLLPATYNSMINPIIYAF) traverse the membrane as a helical segment. The Cytoplasmic segment spans residues 300-330 (RNQDVQKVLWAVCCCCSSSKIPFRSRSPSDV). Cys313 carries the S-palmitoyl cysteine lipid modification. A phosphoserine mark is found at Ser324, Ser326, and Ser328.

The protein belongs to the G-protein coupled receptor 1 family. As to expression, expressed predominantly in the central nervous system, and at low levels in the lung, kidney, testis, ovary and eye. Highly expressed in regions of the brain implicated in the Alzheimer disease.

The protein localises to the cell membrane. Constitutively active G-protein coupled receptor that maintains high 3'-5'-cyclic adenosine monophosphate (cAMP) levels that a plays a role in serveral processes including meiotic arrest in oocytes or neuronal development via activation of numerous intracellular signaling pathways. Acts as an essential activator of thermogenic adipocytes and drives thermogenesis via its intrinsic G(s)-coupling activity without the requirement of a ligand. Has a potential role in modulating a number of brain functions, including behavioral responses to stress, amyloid-beta peptide generation in neurons. Stimulates neurite outgrowth in cerebellar granular neurons modulated via PKA, ERK, and most strongly PI3K-mediated signaling pathways. The chain is G-protein coupled receptor 3 (GPR3) from Homo sapiens (Human).